Reading from the N-terminus, the 994-residue chain is Chloride channel protein 1 (994 aa).

Residues 1–118 (MERSQSQRHG…VLRRKLGEDW (118 aa)) are Cytoplasmic-facing. Residues 119 to 150 (IFLVLLGLLMALVSWCMDYVSAKSLQAYKWTY) form a helical membrane-spanning segment. The Extracellular portion of the chain corresponds to 151-158 (AQMKPSLP). Residues 159–179 (LQYLAWVTFPLILILFSALFC) traverse the membrane as a helical segment. Over 180 to 183 (QLIS) the chain is Cytoplasmic. The note=Loop between two helices intramembrane region spans 184–189 (PQAVGS). The Selectivity filter part_1 motif lies at 188–192 (GSGIP). Position 189 (Ser189) interacts with chloride. Positions 190–195 (GIPEMK) form an intramembrane region, helical. Topologically, residues 196 to 208 (TILRGVVLKEYLT) are cytoplasmic. Positions 209–224 (LKAFVAKVVALTAGLG) form an intramembrane region, helical. An intramembrane region (note=Loop between two helices) is located at residues 225 to 230 (SGIPVG). A Selectivity filter part_2 motif is present at residues 230–234 (GKEGP). Positions 231–246 (KEGPFVHIASICAAVL) form an intramembrane region, helical. The Cytoplasmic segment spans residues 247-268 (SKFMSMFSGVYEQPYYYTDILT). 2 consecutive intramembrane regions (helical) follow at residues 269-280 (VGCAVGVGCCFG) and 281-290 (TPLGGVLFSI). The Cytoplasmic segment spans residues 291-301 (EVTSTYFAVRN). The chain crosses the membrane as a helical span at residues 302–321 (YWRGFFAATFSAFVFRVLAV). The Extracellular segment spans residues 322–347 (WNKDAVTITALFRTNFRMDFPFDLKE). Residues 348–376 (LPAFAVIGICCGFLGAVFVYLHRQVMLGV) traverse the membrane as a helical segment. Over 377–390 (RKHKCLSQFLAKHR) the chain is Cytoplasmic. Residues 391-408 (LLYPGIVTFVIASLTFPP) form a helical membrane-spanning segment. Residues 409-414 (GMGQFM) are Extracellular-facing. The note=Loop between two helices intramembrane region spans 415–418 (AGEL). An intramembrane region (helical) is located at residues 419–426 (MPREAIST). The Extracellular segment spans residues 427–457 (LFDNNTWVKHIGDPQSLGQSAVWLHPQVNVI). Residues 458 to 475 (IIILLFFVMKFWMSIVAT) constitute an intramembrane region (helical). Positions 476–482 (TMPIPCG) form an intramembrane region, note=Loop between two helices. Residues 482–486 (GGFMP) carry the Selectivity filter part_3 motif. Positions 483 to 498 (GFMPVFVLGAAFGRLV) form an intramembrane region, helical. Phe484 is a chloride binding site. Residues 499–521 (GEIMAMLFPEGILFDDIIYKILP) are Extracellular-facing. The helical intramembrane region spans 522 to 538 (GGYAVIGAAALTGAVSH). The segment at residues 539-540 (TV) is an intramembrane region (note=Loop between two helices). Residues 541-554 (STAVICFELTGQIA) constitute an intramembrane region (helical). The Extracellular portion of the chain corresponds to 555 to 557 (HIL). The helical intramembrane region spans 558–571 (PMMVAVILANMVAQ). An intramembrane region (note=Loop between two helices) is located at residues 572 to 575 (SLQP). The segment at residues 576–578 (SLY) is an intramembrane region (helical). Tyr578 provides a ligand contact to chloride. Residues 579–994 (DSIIQVKKLP…DEEDEDELIL (416 aa)) are Cytoplasmic-facing. One can recognise a CBS 1 domain in the interval 609–668 (MVRDVKFVSASCTYGELRNLLQATTVKTLPLVDSKDSMILLGSVERSELQSLLQRHLCAE). Residues 710 to 770 (EDEDEDLSRK…PEASDSADQR (61 aa)) are disordered. Residues 725–739 (TPAPPPPSPPPPPSQ) show a composition bias toward pro residues. The region spanning 827-882 (IDQSPFQLVEQTTLHKTHTLFSLLGLHLAYVTSMGKLRGVLALEELQKAIEGHTKS) is the CBS 2 domain. Disordered regions lie at residues 886–954 (LRPP…ARAE) and 971–994 (ELAD…ELIL). Ser892 is modified (phosphoserine). Pro residues predominate over residues 933-943 (PETPVPPPSPE). Residues 985–994 (DEEDEDELIL) are compositionally biased toward acidic residues.

Belongs to the chloride channel (TC 2.A.49) family. ClC-1/CLCN1 subfamily. In terms of assembly, homodimer. Predominantly expressed in skeletal muscles.

The protein localises to the cell membrane. The protein resides in the sarcolemma. It is found in the T-tubule. It carries out the reaction chloride(in) = chloride(out). The catalysed reaction is thiocyanate(in) = thiocyanate(out). The enzyme catalyses bromide(in) = bromide(out). It catalyses the reaction nitrate(in) = nitrate(out). It carries out the reaction iodide(out) = iodide(in). With respect to regulation, modulated by membrane voltage with depolarization favouring channel opening and hyperpolarization favouring channel closure. Inhibited by acidic pH and ATP binding due to a shift of voltage dependence of common gating to more positive voltages. Inhibited by 9-anthracene-carboxylic. Functionally, voltage-gated chloride channel involved in skeletal muscle excitability. Generates most of the plasma membrane chloride conductance in skeletal muscle fibers, stabilizes the resting membrane potential and contributes to the repolarization phase during action potential firing. Forms a homodimeric channel where each subunit has its own ion conduction pathway. Conducts double-barreled currents controlled by two types of gates, two fast glutamate gates that control each subunit independently and a slow common gate that opens and shuts off both subunits simultaneously. Has a significant open probability at muscle resting potential and is further activated upon membrane depolarization. Permeable to small monovalent anions with ion selectivity for chloride &gt; thiocyanate &gt; bromide &gt; nitrate &gt; iodide. The chain is Chloride channel protein 1 (Clcn1) from Mus musculus (Mouse).